Here is a 222-residue protein sequence, read N- to C-terminus: Cytidylate kinase (222 aa).

An ATP-binding site is contributed by 10-18; sequence GPAGSGKSS.

This sequence belongs to the cytidylate kinase family. Type 1 subfamily.

It localises to the cytoplasm. It catalyses the reaction CMP + ATP = CDP + ADP. It carries out the reaction dCMP + ATP = dCDP + ADP. The protein is Cytidylate kinase of Acholeplasma laidlawii (strain PG-8A).